A 211-amino-acid polypeptide reads, in one-letter code: Ferritin heavy chain (211 aa).

The N-terminal stretch at 1-20 (MNSILLVFAGILAVCLPASA) is a signal peptide. One can recognise a Ferritin-like diiron domain in the interval 35-191 (ITMHRSCRNS…GKASTLKKLM (157 aa)). C41 and C150 are disulfide-bonded. The Fe cation site is built by E52, E87, H90, E136, and Q173.

This sequence belongs to the ferritin family. As to quaternary structure, oligomer of 12 light (L) chains and 12 heavy (H) chains; L and H chains are disulfide-linked. The functional molecule forms a roughly spherical shell with a diameter of 12 nm and contains a central cavity into which the insoluble ferric iron core is deposited.

The protein localises to the golgi apparatus. It is found in the secreted. The enzyme catalyses 4 Fe(2+) + O2 + 4 H(+) = 4 Fe(3+) + 2 H2O. Stores iron in a soluble, non-toxic, readily available form. Important for iron homeostasis. Iron is taken up in the ferrous form and deposited as ferric hydroxides after oxidation. Ferritin is composed of a heavy (H) chain which is responsible for the oxidation and uptake of ferrous iron, and a light (L) chain which facilitates the nucleation of the ferrihydrite iron core. The chain is Ferritin heavy chain from Trichoplusia ni (Cabbage looper).